Here is a 557-residue protein sequence, read N- to C-terminus: Syntaxin-binding protein 4 (557 aa).

Phosphoserine occurs at positions 10 and 12. The PDZ domain occupies 19–105 (AFRVITVTKE…RSESPWEIAF (87 aa)). Position 99 is a phosphoserine; by PKB/AKT2 (Ser-99). Over residues 142-154 (PSETLLPKTSSTP) the composition is skewed to low complexity. The disordered stretch occupies residues 142 to 214 (PSETLLPKTS…SGPQGKISLN (73 aa)). The segment covering 179-194 (SPITSLDNSPADTSNA) has biased composition (polar residues). A Phosphoserine modification is found at Ser-216. The stretch at 298-408 (ADEVGKLRQE…NKESVQDLRK (111 aa)) forms a coiled coil. A Phosphoserine modification is found at Ser-467. Residues 500–533 (DCLPYGWEEAYTADGIKYFINHVTQTTSWIHPVM) form the WW domain.

As to quaternary structure, interacts with STX4A. Phosphorylated on Ser-99 by PKB/AKT2 after insulin treatment. Phosphorylation on Ser-99 abolishes the interaction with STX4A. Detected in skeletal muscle, heart, testis, adipocytes and pancreatic islet cells.

It localises to the cytoplasm. In terms of biological role, plays a role in the translocation of transport vesicles from the cytoplasm to the plasma membrane. Inhibits the translocation of SLC2A4 from intracellular vesicles to the plasma membrane by STX4A binding and preventing the interaction between STX4A and VAMP2. Stimulation with insulin disrupts the interaction with STX4A, leading to increased levels of SLC2A4 at the plasma membrane. May also play a role in the regulation of insulin release by pancreatic beta cells after stimulation by glucose. The protein is Syntaxin-binding protein 4 (Stxbp4) of Mus musculus (Mouse).